Consider the following 629-residue polypeptide: tRNA uridine 5-carboxymethylaminomethyl modification enzyme MnmG (629 aa).

Position 13–18 (13–18 (GGGHAG)) interacts with FAD. 273-287 (GPRYCPSIEDKIHRF) is an NAD(+) binding site.

Belongs to the MnmG family. As to quaternary structure, homodimer. Heterotetramer of two MnmE and two MnmG subunits. Requires FAD as cofactor.

The protein resides in the cytoplasm. In terms of biological role, NAD-binding protein involved in the addition of a carboxymethylaminomethyl (cmnm) group at the wobble position (U34) of certain tRNAs, forming tRNA-cmnm(5)s(2)U34. This chain is tRNA uridine 5-carboxymethylaminomethyl modification enzyme MnmG, found in Shewanella baltica (strain OS195).